We begin with the raw amino-acid sequence, 381 residues long: tRNA N6-adenosine threonylcarbamoyltransferase (381 aa).

Fe cation contacts are provided by His-114 and His-118. Substrate is bound by residues 142-146, Asp-178, Gly-191, Asp-195, and Asn-321; that span reads VVSGG. A Fe cation-binding site is contributed by Asp-349.

Belongs to the KAE1 / TsaD family. Fe(2+) serves as cofactor.

The protein resides in the cytoplasm. It catalyses the reaction L-threonylcarbamoyladenylate + adenosine(37) in tRNA = N(6)-L-threonylcarbamoyladenosine(37) in tRNA + AMP + H(+). Required for the formation of a threonylcarbamoyl group on adenosine at position 37 (t(6)A37) in tRNAs that read codons beginning with adenine. Is involved in the transfer of the threonylcarbamoyl moiety of threonylcarbamoyl-AMP (TC-AMP) to the N6 group of A37, together with TsaE and TsaB. TsaD likely plays a direct catalytic role in this reaction. The chain is tRNA N6-adenosine threonylcarbamoyltransferase from Koribacter versatilis (strain Ellin345).